We begin with the raw amino-acid sequence, 355 residues long: Mu-like prophage FluMu protein gp47 (355 aa).

This sequence belongs to the Mu gp47/PBSX XkdT family.

The protein is Mu-like prophage FluMu protein gp47 of Haemophilus influenzae (strain ATCC 51907 / DSM 11121 / KW20 / Rd).